We begin with the raw amino-acid sequence, 439 residues long: Xylose isomerase (439 aa).

Active-site residues include His-101 and Asp-104. Residues Glu-232, Glu-268, His-271, Asp-296, Asp-307, Asp-309, and Asp-339 each contribute to the Mg(2+) site.

It belongs to the xylose isomerase family. As to quaternary structure, homotetramer. Requires Mg(2+) as cofactor.

It is found in the cytoplasm. It carries out the reaction alpha-D-xylose = alpha-D-xylulofuranose. This Haemophilus influenzae (strain PittGG) protein is Xylose isomerase.